The following is a 250-amino-acid chain: 4-hydroxy-tetrahydrodipicolinate reductase (250 aa).

NAD(+)-binding positions include 10 to 15, 78 to 80, and 105 to 108; these read GAKGRI, GTT, and APNF. His-135 (proton donor/acceptor) is an active-site residue. His-136 serves as a coordination point for (S)-2,3,4,5-tetrahydrodipicolinate. Lys-139 (proton donor) is an active-site residue. Residue 145 to 146 participates in (S)-2,3,4,5-tetrahydrodipicolinate binding; that stretch reads GT.

It belongs to the DapB family.

It is found in the cytoplasm. The enzyme catalyses (S)-2,3,4,5-tetrahydrodipicolinate + NAD(+) + H2O = (2S,4S)-4-hydroxy-2,3,4,5-tetrahydrodipicolinate + NADH + H(+). It carries out the reaction (S)-2,3,4,5-tetrahydrodipicolinate + NADP(+) + H2O = (2S,4S)-4-hydroxy-2,3,4,5-tetrahydrodipicolinate + NADPH + H(+). It participates in amino-acid biosynthesis; L-lysine biosynthesis via DAP pathway; (S)-tetrahydrodipicolinate from L-aspartate: step 4/4. Its function is as follows. Catalyzes the conversion of 4-hydroxy-tetrahydrodipicolinate (HTPA) to tetrahydrodipicolinate. The chain is 4-hydroxy-tetrahydrodipicolinate reductase from Streptomyces coelicolor (strain ATCC BAA-471 / A3(2) / M145).